We begin with the raw amino-acid sequence, 383 residues long: Prokineticin receptor 2 (383 aa).

Residues M1–I54 lie on the Extracellular side of the membrane. 2 N-linked (GlcNAc...) asparagine glycosylation sites follow: N7 and N27. A helical transmembrane segment spans residues V55–I75. Residues A76–N89 lie on the Cytoplasmic side of the membrane. Residues L90–E110 traverse the membrane as a helical segment. The Extracellular portion of the chain corresponds to M111–T136. C128 and C207 are disulfide-bonded. Residues V137 to I157 traverse the membrane as a helical segment. Residues V158–S170 are Cytoplasmic-facing. A helical transmembrane segment spans residues F171 to T191. Residues T192–Y222 are Extracellular-facing. A helical transmembrane segment spans residues F223 to A243. The Cytoplasmic portion of the chain corresponds to R244–T272. Residues V273–F293 form a helical membrane-spanning segment. Topologically, residues T294–T312 are extracellular. Residues A313–V333 traverse the membrane as a helical segment. Topologically, residues T334–K383 are cytoplasmic.

It belongs to the G-protein coupled receptor 1 family. In terms of assembly, homodimer. Abundantly expressed in the CNS and reproductive organs with the highest levels in the cerebrum, cerebellum, testis and ovary.

It localises to the cell membrane. Its function is as follows. Receptor for prokineticin 2. Exclusively coupled to the G(q) subclass of heteromeric G proteins. Activation leads to mobilization of calcium, stimulation of phosphoinositide turnover and activation of p44/p42 mitogen-activated protein kinase. This Rattus norvegicus (Rat) protein is Prokineticin receptor 2 (Prokr2).